The primary structure comprises 359 residues: Dual-specificity RNA methyltransferase RlmN (359 aa).

Catalysis depends on glutamate 102, which acts as the Proton acceptor. The region spanning 108-351 (EKKRATLCIS…IRKNRGSDIQ (244 aa)) is the Radical SAM core domain. Residues cysteine 115 and cysteine 354 are joined by a disulfide bond. [4Fe-4S] cluster is bound by residues cysteine 122, cysteine 126, and cysteine 129. S-adenosyl-L-methionine contacts are provided by residues 178–179 (GE), serine 210, 232–234 (SLH), and asparagine 311. The active-site S-methylcysteine intermediate is the cysteine 354.

It belongs to the radical SAM superfamily. RlmN family. [4Fe-4S] cluster serves as cofactor.

The protein resides in the cytoplasm. The enzyme catalyses adenosine(2503) in 23S rRNA + 2 reduced [2Fe-2S]-[ferredoxin] + 2 S-adenosyl-L-methionine = 2-methyladenosine(2503) in 23S rRNA + 5'-deoxyadenosine + L-methionine + 2 oxidized [2Fe-2S]-[ferredoxin] + S-adenosyl-L-homocysteine. It catalyses the reaction adenosine(37) in tRNA + 2 reduced [2Fe-2S]-[ferredoxin] + 2 S-adenosyl-L-methionine = 2-methyladenosine(37) in tRNA + 5'-deoxyadenosine + L-methionine + 2 oxidized [2Fe-2S]-[ferredoxin] + S-adenosyl-L-homocysteine. Its function is as follows. Specifically methylates position 2 of adenine 2503 in 23S rRNA and position 2 of adenine 37 in tRNAs. m2A2503 modification seems to play a crucial role in the proofreading step occurring at the peptidyl transferase center and thus would serve to optimize ribosomal fidelity. The polypeptide is Dual-specificity RNA methyltransferase RlmN (Buchnera aphidicola subsp. Cinara cedri (strain Cc)).